The sequence spans 156 residues: Ribosomal RNA large subunit methyltransferase H (156 aa).

Residues leucine 74, glycine 105, and 124 to 129 (LSKLTL) contribute to the S-adenosyl-L-methionine site.

It belongs to the RNA methyltransferase RlmH family. Homodimer.

The protein localises to the cytoplasm. The enzyme catalyses pseudouridine(1915) in 23S rRNA + S-adenosyl-L-methionine = N(3)-methylpseudouridine(1915) in 23S rRNA + S-adenosyl-L-homocysteine + H(+). Functionally, specifically methylates the pseudouridine at position 1915 (m3Psi1915) in 23S rRNA. This is Ribosomal RNA large subunit methyltransferase H from Legionella pneumophila (strain Paris).